The sequence spans 213 residues: Phosphoribosyl-dephospho-CoA transferase (213 aa).

Active-site residues include Asp135 and Asp137.

It belongs to the MdcG family.

The catalysed reaction is apo-[malonate decarboxylase ACP] + 2'-(5''-triphospho-alpha-D-ribosyl)-3'-dephospho-CoA = holo-[malonate decarboxylase ACP] + diphosphate. In terms of biological role, transfers 2'-(5-triphosphoribosyl)-3'-dephosphocoenzyme-A to the apo-[acyl-carrier-protein] of the malonate decarboxylase to yield holo-[acyl-carrier-protein]. The chain is Phosphoribosyl-dephospho-CoA transferase from Xanthomonas axonopodis pv. citri (strain 306).